We begin with the raw amino-acid sequence, 153 residues long: Endoribonuclease YbeY (153 aa).

His114, His118, and His124 together coordinate Zn(2+).

The protein belongs to the endoribonuclease YbeY family. Requires Zn(2+) as cofactor.

Its subcellular location is the cytoplasm. In terms of biological role, single strand-specific metallo-endoribonuclease involved in late-stage 70S ribosome quality control and in maturation of the 3' terminus of the 16S rRNA. This Shewanella baltica (strain OS223) protein is Endoribonuclease YbeY.